Reading from the N-terminus, the 291-residue chain is N-acetylmannosamine kinase (291 aa).

Residues 5–12 (AIDIGGTK) and 132–139 (GVGGGVVC) contribute to the ATP site. Positions 156, 166, 168, and 173 each coordinate Zn(2+).

This sequence belongs to the ROK (NagC/XylR) family. NanK subfamily. As to quaternary structure, homodimer.

It carries out the reaction an N-acyl-D-mannosamine + ATP = an N-acyl-D-mannosamine 6-phosphate + ADP + H(+). Its pathway is amino-sugar metabolism; N-acetylneuraminate degradation; D-fructose 6-phosphate from N-acetylneuraminate: step 2/5. Functionally, catalyzes the phosphorylation of N-acetylmannosamine (ManNAc) to ManNAc-6-P. The protein is N-acetylmannosamine kinase of Salmonella typhi.